Here is a 401-residue protein sequence, read N- to C-terminus: Heat stress transcription factor A-4a (401 aa).

A DNA-binding region spans residues 13 to 107; the sequence is LPPFLTKTYE…LMKNIHRRKP (95 aa). The tract at residues 122-188 is hydrophobic repeat HR-A/B; it reads PLTDSERVRM…TMVSFVSQVL (67 aa). Positions 207–213 match the Nuclear localization signal motif; that stretch reads RKRRFPR. Residues 256–265 carry the AHA1 motif; it reads IAIWENLVSD. An AHA2 motif is present at residues 341 to 350; that stretch reads DGFWQQFFSE. Positions 351-373 are disordered; the sequence is NPGSTEQREVQLERKDDKDKAGV. Over residues 356-373 the composition is skewed to basic and acidic residues; it reads EQREVQLERKDDKDKAGV. The Nuclear export signal motif lies at 388-395; sequence ITEQLGHL.

The protein belongs to the HSF family. Class A subfamily. In terms of assembly, homotrimer. Post-translationally, exhibits temperature-dependent phosphorylation.

Its subcellular location is the cytoplasm. The protein resides in the nucleus. In terms of biological role, transcriptional activator that specifically binds DNA sequence 5'-AGAAnnTTCT-3' known as heat shock promoter elements (HSE). This chain is Heat stress transcription factor A-4a (HSFA4A), found in Arabidopsis thaliana (Mouse-ear cress).